A 728-amino-acid chain; its full sequence is LPS-assembly protein LptD (728 aa).

The signal sequence occupies residues methionine 1–alanine 21.

The protein belongs to the LptD family. As to quaternary structure, component of the lipopolysaccharide transport and assembly complex. Interacts with LptE and LptA.

Its subcellular location is the cell outer membrane. Together with LptE, is involved in the assembly of lipopolysaccharide (LPS) at the surface of the outer membrane. This Thiobacillus denitrificans (strain ATCC 25259 / T1) protein is LPS-assembly protein LptD.